The sequence spans 465 residues: Ras GTPase-activating protein-binding protein 1 (465 aa).

Positions 11–133 constitute an NTF2 domain; the sequence is VGREFVRQYY…FYVHNDIFRY (123 aa). Residues lysine 36, lysine 50, lysine 59, lysine 64, lysine 76, and lysine 123 each participate in a glycyl lysine isopeptide (Lys-Gly) (interchain with G-Cter in ubiquitin) cross-link. The acidic disordered region stretch occupies residues 142 to 224; the sequence is VTEPQEESEE…EAALEEAAPD (83 aa). The residue at position 143 (threonine 143) is a Phosphothreonine. The tract at residues 144 to 330 is disordered; the sequence is EPQEESEEEV…GEPGDVEPRR (187 aa). Acidic residues-rich tracts occupy residues 145 to 157 and 184 to 205; these read PQEE…EEPE and EHLE…EPEP. A Phosphoserine modification is found at serine 149. Phosphoserine is present on residues serine 231, serine 248, and serine 251. The segment covering 248 to 257 has biased composition (polar residues); sequence SWASVTSKNL. Composition is skewed to basic and acidic residues over residues 295–305 and 316–330; these read PQRDQRVREQR and PIRE…EPRR. Residues 338–413 enclose the RRM domain; that stretch reads HQLFIGNLPH…VRLNVEEKKT (76 aa). Residues lysine 351 and lysine 355 each participate in a glycyl lysine isopeptide (Lys-Gly) (interchain with G-Cter in ubiquitin) cross-link. Serine 371 is modified (phosphoserine). Lysine 374 is covalently cross-linked (Glycyl lysine isopeptide (Lys-Gly) (interchain with G-Cter in ubiquitin)). At lysine 374 the chain carries N6-acetyllysine; alternate. Lysine 374 is covalently cross-linked (Glycyl lysine isopeptide (Lys-Gly) (interchain with G-Cter in SUMO2); alternate). A Glycyl lysine isopeptide (Lys-Gly) (interchain with G-Cter in ubiquitin); alternate cross-link involves residue lysine 391. The interval 408–464 is RG-rich region; it reads VEEKKTRAAREGDRRDNRLRGPGGPRGGPSGGMRGPPRGGMVQKPGFGVGRGITTPR. Positions 411 to 426 are enriched in basic and acidic residues; that stretch reads KKTRAAREGDRRDNRL. Residues 411–465 are disordered; sequence KKTRAAREGDRRDNRLRGPGGPRGGPSGGMRGPPRGGMVQKPGFGVGRGITTPRQ. Arginine 427 bears the Asymmetric dimethylarginine mark. Positions 428–445 are enriched in gly residues; sequence GPGGPRGGPSGGMRGPPR. Position 433 is an asymmetric dimethylarginine; alternate (arginine 433). Omega-N-methylarginine; alternate occurs at positions 433, 445, 458, and 464. The residue at position 458 (arginine 458) is a Dimethylated arginine; alternate.

Homodimer and oligomer. Component of a TAU mRNP complex, at least composed of IGF2BP1, ELAVL4 and G3BP1. Binds to the SH3 domain of Ras GTPase-activating protein (RASA1) in proliferating cells. No interaction in quiescent cells. Interacts (via NTF2 domain) with USP10; inhibiting stress granule formation by lowering G3BP1 valence. Interacts (via NTF2 domain) with CAPRIN1; promoting stress granule formation by lowering the saturation-concentration of G3BP1. Interacts (via NTF2 domain) with UBAP2L; promoting stress granule formation. Associates (via RG-rich region) with 40S ribosome subunits. Interacts with RPTOR and SPAG5; this complex is increased by oxidative stress. Interacts with ATXN2L. Interacts with STYXL1. Interacts with CGAS (via N-terminus); this interaction promotes the DNA-binding and activation of CGAS. Interacts (via C-terminus) with RIGI. Interacts with PABPC1. Interacts with QKI (isoforms QKI6 and QKI7); directing N(7)-methylguanine-containing mRNAs to stress granules. Mg(2+) is required as a cofactor. Post-translationally, phosphorylation of the acidic disordered region regulates stress granule assembly. RASA1-dependent phosphorylation of Ser-149 induces a conformational change that prevents self-association. Dephosphorylation after HRAS activation is required for stress granule assembly. Ser-149 phosphorylation induces partial nuclear localization. In terms of processing, arg-435 is dimethylated, probably to asymmetric dimethylarginine. Ubiquitinated by TRIM21 via 'Lys-63'-linked polyubiquitination in the NTF2 domain in response to heat shock, leading to stress granule disassembly: ubiquitination promotes interaction with the FAF2 adapter, followed by interaction with VCP, which extracts G3BP1 from stress granules, leading to stress granule disassembly. In case of prolonged stress, ubiquitination by TRIM21 leads to autophagy-dependent degradation of G3BP1 via recruitment of ubiquitinated G3BP1 by SQSTM1 and/or CALCOCO2 to autophagosomes. Ubiquitous.

It localises to the cytoplasm. It is found in the cytosol. The protein localises to the perikaryon. The protein resides in the stress granule. Its subcellular location is the nucleus. It catalyses the reaction ATP + H2O = ADP + phosphate + H(+). With respect to regulation, under physiological conditions, G3BP1 adopts a compact state that is stabilized by intramolecular interactions between the RG-rich and the acidic regions that inhibit phase separation. Upon stress, polysomes disassemble and mRNAs are released in an unfolded protein-free state. Binding of unfolded mRNA to G3BP1 outcompetes the intramolecular interactions and RNA-bound G3BP1 adopts an expanded conformation in which the RG-rich region becomes exposed to engage in protein-protein and protein-RNA interactions, allowing physical cross-linking of RNA molecules to form protein-RNA condensates, leading to liquid-liquid phase separation (LLPS). In terms of biological role, protein involved in various processes, such as stress granule formation and innate immunity. Plays an essential role in stress granule formation. Stress granules are membraneless compartments that store mRNAs and proteins, such as stalled translation pre-initiation complexes, in response to stress. Promotes formation of stress granules phase-separated membraneless compartment by undergoing liquid-liquid phase separation (LLPS) upon unfolded RNA-binding: functions as a molecular switch that triggers RNA-dependent LLPS in response to a rise in intracellular free RNA concentrations. Also acts as an ATP- and magnesium-dependent helicase: unwinds DNA/DNA, RNA/DNA, and RNA/RNA substrates with comparable efficiency. Acts unidirectionally by moving in the 5' to 3' direction along the bound single-stranded DNA. Unwinds preferentially partial DNA and RNA duplexes having a 17 bp annealed portion and either a hanging 3' tail or hanging tails at both 5'- and 3'-ends. Plays an essential role in innate immunity by promoting CGAS and RIGI activity. Participates in the DNA-triggered cGAS/STING pathway by promoting the DNA binding and activation of CGAS. Triggers the condensation of cGAS, a process probably linked to the formation of membrane-less organelles. Also enhances RIGI-induced type I interferon production probably by helping RIGI at sensing pathogenic RNA. May also act as a phosphorylation-dependent sequence-specific endoribonuclease in vitro: Cleaves exclusively between cytosine and adenine and cleaves MYC mRNA preferentially at the 3'-UTR. This chain is Ras GTPase-activating protein-binding protein 1 (G3bp1), found in Mus musculus (Mouse).